The following is a 125-amino-acid chain: Probable 4-amino-4-deoxy-L-arabinose-phosphoundecaprenol flippase subunit ArnF (125 aa).

At 1-2 (MG) the chain is on the cytoplasmic side. The chain crosses the membrane as a helical span at residues 3-23 (VMWGLISVAIASLAQLSLGFA). The Periplasmic portion of the chain corresponds to 24-33 (MMRLPSIAHP). The chain crosses the membrane as a helical span at residues 34 to 54 (LAFISGLGAFNAATLALFAGL). The Cytoplasmic portion of the chain corresponds to 55–76 (AGYLVSVFCWQKTLHTLALSKA). A helical membrane pass occupies residues 77–97 (YALLSLSYVLVWVASMLLPGL). Residues 98 to 100 (QGA) lie on the Periplasmic side of the membrane. Residues 101–121 (FSLKAMLGVLCIMAGVMLIFL) form a helical membrane-spanning segment. Residues 122-125 (PARS) are Cytoplasmic-facing.

This sequence belongs to the ArnF family. Heterodimer of ArnE and ArnF.

It localises to the cell inner membrane. Its pathway is bacterial outer membrane biogenesis; lipopolysaccharide biosynthesis. In terms of biological role, translocates 4-amino-4-deoxy-L-arabinose-phosphoundecaprenol (alpha-L-Ara4N-phosphoundecaprenol) from the cytoplasmic to the periplasmic side of the inner membrane. This chain is Probable 4-amino-4-deoxy-L-arabinose-phosphoundecaprenol flippase subunit ArnF, found in Salmonella choleraesuis (strain SC-B67).